The following is a 506-amino-acid chain: Glycine--tRNA ligase (506 aa).

Residues R99 and E189 each coordinate substrate. ATP-binding positions include 221 to 223, 231 to 236, 305 to 306, and 364 to 367; these read RNE, FRVREF, EL, and GVDR. Substrate is bound at residue 236–240; sequence FEQME. 360-364 is a binding site for substrate; it reads EPSAG.

The protein belongs to the class-II aminoacyl-tRNA synthetase family. As to quaternary structure, homodimer.

The protein resides in the cytoplasm. The catalysed reaction is tRNA(Gly) + glycine + ATP = glycyl-tRNA(Gly) + AMP + diphosphate. Functionally, catalyzes the attachment of glycine to tRNA(Gly). In Thermus thermophilus (strain ATCC BAA-163 / DSM 7039 / HB27), this protein is Glycine--tRNA ligase.